The primary structure comprises 101 residues: MKQYKIKVLWLRNNIAIAVDRLIGDSLFPMTYYYFWPRTDAWEQLKIELDSQPGLFAKDKVVILNQVTRIIDYWQENKKSVFPNLSELQSHFPDLICSGCY.

It belongs to the chloroplast-specific ribosomal protein cS23 family. In terms of assembly, part of the 30S ribosomal subunit.

It is found in the plastid. Its subcellular location is the chloroplast. Probably a ribosomal protein or a ribosome-associated protein. The protein is Small ribosomal subunit protein cS23 (ycf65) of Cyanidium caldarium (Red alga).